A 201-amino-acid chain; its full sequence is Holliday junction branch migration complex subunit RuvA (201 aa).

A domain I region spans residues 1–65; the sequence is MIAYIEGRVA…EDALELYGFS (65 aa). A domain II region spans residues 66-143; sequence GWDERQTFLV…KVESLPASAG (78 aa). The segment at 143–147 is flexible linker; that stretch reads GLAAG. Residues 148-201 form a domain III region; it reads VPGSVLRDAVQALGNLGYAEEEAAPVLKNILKQDPDLDVSEALRAALKALAKAR.

This sequence belongs to the RuvA family. As to quaternary structure, homotetramer. Forms an RuvA(8)-RuvB(12)-Holliday junction (HJ) complex. HJ DNA is sandwiched between 2 RuvA tetramers; dsDNA enters through RuvA and exits via RuvB. An RuvB hexamer assembles on each DNA strand where it exits the tetramer. Each RuvB hexamer is contacted by two RuvA subunits (via domain III) on 2 adjacent RuvB subunits; this complex drives branch migration. In the full resolvosome a probable DNA-RuvA(4)-RuvB(12)-RuvC(2) complex forms which resolves the HJ.

It is found in the cytoplasm. The RuvA-RuvB-RuvC complex processes Holliday junction (HJ) DNA during genetic recombination and DNA repair, while the RuvA-RuvB complex plays an important role in the rescue of blocked DNA replication forks via replication fork reversal (RFR). RuvA specifically binds to HJ cruciform DNA, conferring on it an open structure. The RuvB hexamer acts as an ATP-dependent pump, pulling dsDNA into and through the RuvAB complex. HJ branch migration allows RuvC to scan DNA until it finds its consensus sequence, where it cleaves and resolves the cruciform DNA. This is Holliday junction branch migration complex subunit RuvA from Oleidesulfovibrio alaskensis (strain ATCC BAA-1058 / DSM 17464 / G20) (Desulfovibrio alaskensis).